The following is a 704-amino-acid chain: Elongation factor G (704 aa).

The 277-residue stretch at 9–285 folds into the tr-type G domain; the sequence is AKVRNIGIMA…AIVAYLPSPL (277 aa). Residues 18-25, 82-86, and 136-139 each bind GTP; these read AHIDAGKT, DTPGH, and NKMD.

It belongs to the TRAFAC class translation factor GTPase superfamily. Classic translation factor GTPase family. EF-G/EF-2 subfamily.

It is found in the cytoplasm. Its function is as follows. Catalyzes the GTP-dependent ribosomal translocation step during translation elongation. During this step, the ribosome changes from the pre-translocational (PRE) to the post-translocational (POST) state as the newly formed A-site-bound peptidyl-tRNA and P-site-bound deacylated tRNA move to the P and E sites, respectively. Catalyzes the coordinated movement of the two tRNA molecules, the mRNA and conformational changes in the ribosome. This is Elongation factor G from Thermobifida fusca (strain YX).